Consider the following 955-residue polypeptide: Anoctamin-4 (955 aa).

At 1–352 (MEASSSGITN…FGEKIGLYFA (352 aa)) the chain is on the extracellular side. Residues 72–100 (CKDDDSLLHPGNLTSTSDDASRLEAGGET) form a disordered region. N-linked (GlcNAc...) asparagine glycosylation is found at Asn83, Asn105, Asn257, and Asn288. The helical transmembrane segment at 353–373 (WLGWYTGMLFPAAFIGLFVFL) threads the bilayer. Over 374-424 (YGVTTLDHSQVSKEVCQATDIIMCPVCDKYCPFMRLSDSCVYAKVTHLFDN) the chain is Cytoplasmic. Residues 425–445 (GATVFFAVFMAVWATVFLEFW) traverse the membrane as a helical segment. Over 446-505 (KRRRAVIAYDWDLIDWEEEEEEIRPQFEAKYSKKERMNPISGKPEPYQAFTDKCSRLIVS) the chain is Extracellular. A helical membrane pass occupies residues 506–526 (ASGIFFMICVVIAAVFGIVIY). Residues 527–547 (RVVTVSTFAAFKWALIRNNSQ) are Cytoplasmic-facing. A helical transmembrane segment spans residues 548 to 568 (VATTGTAVCINFCIIMLLNVL). At 569–595 (YEKVALLLTNLEQPRTESEWENSFTLK) the chain is on the extracellular side. Residues 596 to 616 (MFLFQFVNLNSSTFYIAFFLG) traverse the membrane as a helical segment. The Cytoplasmic segment spans residues 617 to 715 (RFTGHPGAYL…AYGLFDEYLE (99 aa)). A helical transmembrane segment spans residues 716-736 (MILQFGFTTIFVAAFPLAPLL). Topologically, residues 737 to 768 (ALLNNIIEIRLDAYKFVTQWRRPLASRAKDIG) are extracellular. The helical transmembrane segment at 769–789 (IWYGILEGIGILSVITNAFVI) threads the bilayer. Residues 790–885 (AITSDFIPRL…QFWHVLAARL (96 aa)) lie on the Cytoplasmic side of the membrane. Residues 886–906 (AFIIVFEHLVFCIKHLISYLI) traverse the membrane as a helical segment. Residues 907–955 (PDLPKDLRDRMRREKYLIQEMMYEAELERLQKERKERKKNGKAHHNEWP) lie on the Extracellular side of the membrane.

The protein belongs to the anoctamin family.

Its subcellular location is the cell membrane. The enzyme catalyses a 1,2-diacyl-sn-glycero-3-phospho-L-serine(in) = a 1,2-diacyl-sn-glycero-3-phospho-L-serine(out). It carries out the reaction a beta-D-galactosyl-(1&lt;-&gt;1')-N-acylsphing-4-enine(out) = a beta-D-galactosyl-(1&lt;-&gt;1')-N-acylsphing-4-enine(in). It catalyses the reaction a 1,2-diacyl-sn-glycero-3-phosphocholine(in) = a 1,2-diacyl-sn-glycero-3-phosphocholine(out). Has calcium-dependent phospholipid scramblase activity; scrambles phosphatidylserine, phosphatidylcholine and galactosylceramide. Does not exhibit calcium-activated chloride channel (CaCC) activity. This Homo sapiens (Human) protein is Anoctamin-4 (ANO4).